The chain runs to 536 residues: Chlorophyllide a oxygenase, chloroplastic (536 aa).

The transit peptide at 1–36 (MNAAVFSPSALSLPISFSKTRSSFLSRKKGVKGEFR) directs the protein to the chloroplast. The stretch at 123–150 (IGTVKKELAGLQEELSKAHQQVHISEAR) forms a coiled coil. The 101-residue stretch at 221–321 (WYPVAFTADL…CLEQEGMIWI (101 aa)) folds into the Rieske domain. Residues C262, H264, C281, and H284 each contribute to the [2Fe-2S] cluster site. D360, D364, H367, and H372 together coordinate Fe cation.

Its subcellular location is the plastid. The protein localises to the chloroplast membrane. It localises to the chloroplast thylakoid membrane. It carries out the reaction chlorophyllide a + 2 NADPH + 2 O2 + 2 H(+) = chlorophyllide b + 2 NADP(+) + 3 H2O. It functions in the pathway porphyrin-containing compound metabolism; chlorophyll biosynthesis. Functionally, catalyzes a two-step oxygenase reaction involved in the synthesis of chlorophyll b. Acts specifically on the non-esterified chlorophyllide a and not on chlorophyll a. The chain is Chlorophyllide a oxygenase, chloroplastic (CAO) from Arabidopsis thaliana (Mouse-ear cress).